A 272-amino-acid chain; its full sequence is Indole-3-glycerol phosphate synthase (272 aa).

It belongs to the TrpC family.

It carries out the reaction 1-(2-carboxyphenylamino)-1-deoxy-D-ribulose 5-phosphate + H(+) = (1S,2R)-1-C-(indol-3-yl)glycerol 3-phosphate + CO2 + H2O. Its pathway is amino-acid biosynthesis; L-tryptophan biosynthesis; L-tryptophan from chorismate: step 4/5. This Mycobacterium sp. (strain JLS) protein is Indole-3-glycerol phosphate synthase.